The primary structure comprises 873 residues: Zinc fingers and homeoboxes protein 1 (873 aa).

Phosphothreonine is present on Thr-36. Positions 41-63 (AKAESVSSDEEVHGSVDSDNQQN) are disordered. Phosphoserine occurs at positions 45, 47, and 48. Residues 50 to 63 (EEVHGSVDSDNQQN) show a composition bias toward basic and acidic residues. C2H2-type zinc fingers lie at residues 70–93 (YECK…DSEH) and 102–125 (YVCV…LKYH). Residue Lys-159 forms a Glycyl lysine isopeptide (Lys-Gly) (interchain with G-Cter in SUMO2) linkage. The interval 198–247 (VHHNSAEGTSEEKENGVKASQEENAESVSSSALESNTSTSTINRVHPSPA) is disordered. The residue at position 202 (Ser-202) is a Phosphoserine. A compositionally biased stretch (low complexity) spans 223 to 238 (ESVSSSALESNTSTST). Positions 272 to 432 (NSNLLPKVLI…QTNVQKSQVP (161 aa)) are required for dimerization. Positions 272–564 (NSNLLPKVLI…SQQKQSWNPF (293 aa)) are required for interaction with NFYA. The homeobox 1 DNA-binding region spans 284-346 (NSIPTYNAAL…LKHGVSWTPE (63 aa)). The segment at 429–456 (SQVPAAQPATDTKPATAAVPSSPSVRPE) is disordered. Residues Lys-441 and Lys-485 each participate in a glycyl lysine isopeptide (Lys-Gly) (interchain with G-Cter in SUMO2) cross-link. A DNA-binding region (homeobox 2) is located at residues 464 to 526 (SFGIRAKKTK…YNQRNSKSNQ (63 aa)). Disordered regions lie at residues 541 to 568 (DSSD…PDFA), 627 to 668 (DEKI…CKKT), and 731 to 767 (SSSL…KRMN). The homeobox 3 DNA-binding region spans 569–630 (PQKFKEKTAE…KTKALKDEKI (62 aa)). Lys-629 participates in a covalent cross-link: Glycyl lysine isopeptide (Lys-Gly) (interchain with G-Cter in SUMO2). Ser-648 carries the phosphoserine modification. Residues 660–722 (GTGKICKKTP…YAWKNGNLKW (63 aa)) constitute a DNA-binding region (homeobox 4). The tract at residues 734 to 768 (LNGLSSLRRRGRGRPKGRGRGRPRGRPRGGKRMNT) is required for nuclear localization. Basic residues predominate over residues 740–764 (LRRRGRGRPKGRGRGRPRGRPRGGK). Position 774 is a phosphoserine (Ser-774). The homeobox 5 DNA-binding region spans 777–832 (KFKTGTAILKDYYLKHKFLNEQDLDELVNRSHMGYEQVREWFAERQRRSELGIELF). A disordered region spans residues 829 to 873 (IELFEENEEEDEVVDDQEEDEEETDDSDTWEPPRHVKRKLSKSDD). Acidic residues predominate over residues 831-857 (LFEENEEEDEVVDDQEEDEEETDDSDT). Positions 831–873 (LFEENEEEDEVVDDQEEDEEETDDSDTWEPPRHVKRKLSKSDD) are required for repressor activity. Positions 863–873 (HVKRKLSKSDD) are enriched in basic residues.

It belongs to the ZHX family. In terms of assembly, forms homodimers. Heterodimer (via HD1 domain) with ZHX2 (via HD1 domain). Also forms a heterodimer with ZHX3 which is a prerequisite for repressor activity. Interacts with ATF7IP and NFYA. Interacts (via homeobox domains) with DNMT3B (via PWWP domain). As to expression, widely expressed with highest levels in brain.

Its subcellular location is the nucleus. Its function is as follows. Acts as a transcriptional repressor. Increases DNMT3B-mediated repressive transcriptional activity when DNMT3B is tethered to DNA. May link molecule between DNMT3B and other co-repressor proteins. This chain is Zinc fingers and homeoboxes protein 1 (Zhx1), found in Mus musculus (Mouse).